The primary structure comprises 572 residues: Na(+)/citrate cotransporter (572 aa).

A run of 8 helical transmembrane segments spans residues 13 to 33 (SFVI…LVPD), 53 to 73 (VIPV…LKVL), 80 to 100 (VQYM…ATAV), 124 to 144 (LMLG…NTAT), 218 to 238 (AASI…VLLG), 255 to 275 (SWFA…WLWL), 315 to 335 (PLSY…ILWF), and 357 to 377 (HVTD…VPSQ). Asparagine 382 carries an N-linked (GlcNAc...) asparagine glycan. 4 helical membrane passes run 410 to 430 (VPWG…GCET), 443 to 463 (PLSS…VAMT), 491 to 511 (PLYV…LPVA), and 532 to 552 (TGLV…NTWG). An N-linked (GlcNAc...) asparagine glycan is attached at asparagine 566.

Belongs to the SLC13A/DASS transporter (TC 2.A.47) family. NADC subfamily. As to quaternary structure, homodimer. Expressed in liver, testis and brain.

It is found in the cell membrane. The enzyme catalyses citrate(out) + 4 Na(+)(out) = citrate(in) + 4 Na(+)(in). Its activity is regulated as follows. Inhibited by Li(+). High-affinity sodium/citrate cotransporter that mediates citrate entry into cells, which is a critical participant of biochemical pathways. May function in various metabolic processes in which citrate has a critical role such as energy production (Krebs cycle), fatty acid synthesis, cholesterol synthesis, glycolysis, and gluconeogenesis. Transports citrate into the cell in a Na(+)-dependent manner, recognizing the trivalent form of citrate (physiological pH) rather than the divalent form. Can recognize succinate as a substrate, but its affinity for succinate is several fold lower than for citrate. The stoichiometry is probably 4 Na(+) for each carboxylate, irrespective of whether the translocated substrate is divalent or trivalent, rendering the process electrogenic. Involved in the regulation of citrate levels in the brain. The polypeptide is Na(+)/citrate cotransporter (Slc13a5) (Rattus norvegicus (Rat)).